A 648-amino-acid chain; its full sequence is Protein teflon (648 aa).

The C2H2-type 1 zinc-finger motif lies at 33–56 (LYCHFCRDLFTQLPEFLRHLQGAH). 2 disordered regions span residues 76 to 127 (SGEQ…GSQN) and 146 to 170 (EHIN…NSES). The span at 85-94 (VGHNSSSSDS) shows a compositional bias: polar residues. Over residues 96 to 107 (GLAKSEDSRATE) the composition is skewed to basic and acidic residues. Residues 598–620 (YFCKCCDDIFTLNEDYIRHLVSQ) form a C2H2-type 2; degenerate zinc finger. The C2H2-type 3 zinc finger occupies 624–647 (YQCTKCIKTFKYQGHYDKHMRTVH).

Belongs to the Teflon family.

It is found in the nucleus. The protein localises to the chromosome. Its function is as follows. Specifically required in males for proper segregation of autosomal bivalents at meiosis I. Expression is required in the male germ line prior to spermatocyte stage S4. May have a role as a bridging molecule maintaining adhesion to hold autosome bivalents together via heterochromatic connections. The chain is Protein teflon from Drosophila yakuba (Fruit fly).